We begin with the raw amino-acid sequence, 1232 residues long: Anion exchange protein 3 (1232 aa).

The segment covering 1-11 (MANGVIPPPGG) has biased composition (pro residues). Disordered regions lie at residues 1-316 (MANG…KLDR) and 429-499 (NDDK…DSHR). Residues 1–708 (MANGVIPPPG…DLRDALHSQC (708 aa)) are Cytoplasmic-facing. Positions 58 to 75 (DPEKPSRSYSERDFEFHR) are enriched in basic and acidic residues. Composition is skewed to basic residues over residues 76 to 97 (HTSH…KLRR) and 104 to 113 (RHTRRKRKKE). The segment covering 134–152 (VDEEEEEEEEEEGESEAEP) has biased composition (acidic residues). 4 positions are modified to phosphoserine: Ser-167, Ser-170, Ser-175, and Ser-198. Positions 267 to 279 (DDMKSHRLEDNPG) are enriched in basic and acidic residues. The span at 280 to 289 (VRRHLVKKPS) shows a compositional bias: basic residues. The residue at position 295 (Arg-295) is an Omega-N-methylarginine. A compositionally biased stretch (basic residues) spans 305–316 (LRRKKKKKKLDR). Polar residues predominate over residues 440–450 (NPSSSSMNSVL). Over residues 481 to 499 (HDPDAKEKPLHMPGGDSHR) the composition is skewed to basic and acidic residues. The next 5 helical transmembrane spans lie at 709-731 (VAAV…GLLG), 737-774 (LMGV…LLVF), 794-816 (VWVG…SFLV), 826-847 (IFAF…YKVF), and 893-910 (ALLS…AFFL). The membrane (anion exchange) stretch occupies residues 709–1232 (VAAVLFIYFA…DEYNELHMPV (524 aa)). Topologically, residues 911–925 (RKFRNSRFLGGKARR) are cytoplasmic. A run of 5 helical transmembrane segments spans residues 926–946 (IIGD…DYSI), 980–1002 (PFPP…LIFM), 1028–1049 (LLLI…LTAA), 1083–1128 (VTGV…IQLS), and 1155–1191 (MHLF…TVPL). Cys-1165 carries S-palmitoyl cysteine lipidation.

The protein belongs to the anion exchanger (TC 2.A.31) family.

It localises to the cell membrane. It carries out the reaction hydrogencarbonate(in) + chloride(out) = hydrogencarbonate(out) + chloride(in). In terms of biological role, sodium-independent anion exchanger which mediates the electroneutral exchange of chloride for bicarbonate ions across the cell membrane. May be involved in the regulation of intracellular pH, and the modulation of cardiac action potential. The chain is Anion exchange protein 3 (SLC4A3) from Plecturocebus moloch (Dusky titi monkey).